The sequence spans 29 residues: Cytochrome b6-f complex subunit 8 (29 aa).

Residues 3–23 traverse the membrane as a helical segment; that stretch reads IVSIAWAALMVVFSFSLSLVV.

The protein belongs to the PetN family. The 4 large subunits of the cytochrome b6-f complex are cytochrome b6, subunit IV (17 kDa polypeptide, PetD), cytochrome f and the Rieske protein, while the 4 small subunits are PetG, PetL, PetM and PetN. The complex functions as a dimer.

It localises to the plastid. The protein resides in the chloroplast thylakoid membrane. In terms of biological role, component of the cytochrome b6-f complex, which mediates electron transfer between photosystem II (PSII) and photosystem I (PSI), cyclic electron flow around PSI, and state transitions. This chain is Cytochrome b6-f complex subunit 8, found in Phaseolus vulgaris (Kidney bean).